The following is a 309-amino-acid chain: Probable RuBisCO transcriptional regulator (309 aa).

The HTH lysR-type domain occupies 6–63; sequence FTLDQLRILKAIVKEGSFKRAADSLYVSQPAISLQIQNLEKQLNIPLFERSNKKATLT. Positions 23–42 form a DNA-binding region, H-T-H motif; the sequence is FKRAADSLYVSQPAISLQIQ.

It belongs to the LysR transcriptional regulatory family.

It localises to the plastid. Its subcellular location is the chloroplast. Its function is as follows. Trans-acting transcriptional regulator of RuBisCO genes (rbcL and rbcS) expression. This chain is Probable RuBisCO transcriptional regulator (rbcR), found in Gracilaria tenuistipitata var. liui (Red alga).